We begin with the raw amino-acid sequence, 258 residues long: Protein T1 (258 aa).

An N-terminal signal peptide occupies residues 1–17 (MRRLCIILLVYVYATFA). N-linked (GlcNAc...) asparagine; by host glycans are attached at residues N67, N151, and N172.

Belongs to the poxviruses A41 family.

The protein is Protein T1 of Rabbit fibroma virus (strain Kasza) (RFV).